A 296-amino-acid chain; its full sequence is Bifunctional protein FolD (296 aa).

Residues 168-170, Ser197, and Thr238 contribute to the NADP(+) site; that span reads GRS.

It belongs to the tetrahydrofolate dehydrogenase/cyclohydrolase family. Homodimer.

It carries out the reaction (6R)-5,10-methylene-5,6,7,8-tetrahydrofolate + NADP(+) = (6R)-5,10-methenyltetrahydrofolate + NADPH. It catalyses the reaction (6R)-5,10-methenyltetrahydrofolate + H2O = (6R)-10-formyltetrahydrofolate + H(+). It functions in the pathway one-carbon metabolism; tetrahydrofolate interconversion. In terms of biological role, catalyzes the oxidation of 5,10-methylenetetrahydrofolate to 5,10-methenyltetrahydrofolate and then the hydrolysis of 5,10-methenyltetrahydrofolate to 10-formyltetrahydrofolate. This is Bifunctional protein FolD from Porphyromonas gingivalis (strain ATCC BAA-308 / W83).